Here is a 97-residue protein sequence, read N- to C-terminus: UPF0125 protein plu3376 (97 aa).

The protein belongs to the UPF0125 (RnfH) family.

This is UPF0125 protein plu3376 from Photorhabdus laumondii subsp. laumondii (strain DSM 15139 / CIP 105565 / TT01) (Photorhabdus luminescens subsp. laumondii).